The sequence spans 152 residues: Transcriptional repressor NrdR (152 aa).

Polar residues predominate over residues 1-10 (MKCPSCQHNG). The segment at 1-21 (MKCPSCQHNGSRVLDSRPADE) is disordered. Residues 3–34 (CPSCQHNGSRVLDSRPADEGKSIRRRRECEAC) fold into a zinc finger. In terms of domain architecture, ATP-cone spans 49–139 (LIVVKKEGVR…VYRQFKDINV (91 aa)).

Belongs to the NrdR family. It depends on Zn(2+) as a cofactor.

Functionally, negatively regulates transcription of bacterial ribonucleotide reductase nrd genes and operons by binding to NrdR-boxes. This chain is Transcriptional repressor NrdR, found in Bacillus velezensis (strain DSM 23117 / BGSC 10A6 / LMG 26770 / FZB42) (Bacillus amyloliquefaciens subsp. plantarum).